We begin with the raw amino-acid sequence, 149 residues long: Deoxyuridine 5'-triphosphate nucleotidohydrolase (149 aa).

Substrate contacts are provided by residues 68 to 70 (RSG), N81, and 85 to 87 (LID).

Belongs to the dUTPase family. It depends on Mg(2+) as a cofactor.

The catalysed reaction is dUTP + H2O = dUMP + diphosphate + H(+). It functions in the pathway pyrimidine metabolism; dUMP biosynthesis; dUMP from dCTP (dUTP route): step 2/2. Its function is as follows. This enzyme is involved in nucleotide metabolism: it produces dUMP, the immediate precursor of thymidine nucleotides and it decreases the intracellular concentration of dUTP so that uracil cannot be incorporated into DNA. The protein is Deoxyuridine 5'-triphosphate nucleotidohydrolase of Aromatoleum aromaticum (strain DSM 19018 / LMG 30748 / EbN1) (Azoarcus sp. (strain EbN1)).